Here is a 239-residue protein sequence, read N- to C-terminus: tRNA (guanine-N(1)-)-methyltransferase (239 aa).

S-adenosyl-L-methionine-binding positions include glycine 108 and 127–132 (LGDFVL).

The protein belongs to the RNA methyltransferase TrmD family. As to quaternary structure, homodimer.

It is found in the cytoplasm. It catalyses the reaction guanosine(37) in tRNA + S-adenosyl-L-methionine = N(1)-methylguanosine(37) in tRNA + S-adenosyl-L-homocysteine + H(+). Its function is as follows. Specifically methylates guanosine-37 in various tRNAs. The chain is tRNA (guanine-N(1)-)-methyltransferase from Streptococcus thermophilus (strain CNRZ 1066).